The primary structure comprises 123 residues: MTLTLTEAAEFRLRTFLLSFSKDENSTQRGIRVAVEDGGCSGYQYSIKIINAPQADDMVLQQGKLRIYVDSQSAPLLEGVVVDFVDGLLESGFKFSNPNATDTCGCGKSFQAGNCSPAGVPCS.

This sequence belongs to the HesB/IscA family.

Its function is as follows. May be required for efficient nitrogen fixation. In Trichormus variabilis (strain ATCC 29413 / PCC 7937) (Anabaena variabilis), this protein is Protein HesB, vegetative (hesB2).